A 743-amino-acid chain; its full sequence is Probable TonB-dependent receptor BfrD (743 aa).

The signal sequence occupies residues 1-30 (MKFYSSHPMPESLAAAIAVPLLGLLPAAQA). The TBDR plug domain occupies 62 to 168 (PLADTPRTVQ…AGGSINLVTK (107 aa)). One can recognise a TBDR beta-barrel domain in the interval 173–743 (QDFTEVQAGI…SAMLTFKLSY (571 aa)). The short motif at 726–743 (YAALGPGRSAMLTFKLSY) is the TonB C-terminal box element.

This sequence belongs to the TonB-dependent receptor family.

Its subcellular location is the cell outer membrane. Functionally, probably involved in iron transport. The sequence is that of Probable TonB-dependent receptor BfrD (bfrD) from Bordetella pertussis (strain Tohama I / ATCC BAA-589 / NCTC 13251).